A 153-amino-acid polypeptide reads, in one-letter code: Proline-rich membrane anchor 1 (153 aa).

The N-terminal stretch at 1-35 (MLLRDLVLRRGCCWSSLLLHCALHPLWGFVQVTHG) is a signal peptide. Over 36–92 (EPQKSCSKVTDSCRHVCQCRPPPPLPPPPPPPPPPRLLSAPAPNSTSCPTEESWWSG) the chain is Extracellular. The PRAD domain maps to 56–70 (PPPPLPPPPPPPPPP). Residues 59-71 (PLPPPPPPPPPPR) show a composition bias toward pro residues. A disordered region spans residues 59–79 (PLPPPPPPPPPPRLLSAPAPN). N-linked (GlcNAc...) asparagine glycosylation occurs at N79. The chain crosses the membrane as a helical span at residues 93–113 (LVIIIAVCCASLVFLTVLVII). Topologically, residues 114–153 (CYKAIKRKPLRKDENGTSVAEYPMSASQSNKGVDVNNAVV) are cytoplasmic.

In terms of assembly, interacts with ACHE, probably through disulfide bonds.

It localises to the cell membrane. It is found in the cell junction. The protein resides in the synapse. In terms of biological role, required to anchor acetylcholinesterase (ACHE) to the basal lamina of the neuromuscular junction and to the membrane of neuronal synapses in brain. Also able to organize ACHE into tetramers. The sequence is that of Proline-rich membrane anchor 1 (PRIMA1) from Homo sapiens (Human).